Here is a 232-residue protein sequence, read N- to C-terminus: Histone H1-II (232 aa).

Residues 1–18 (MSDPAPEVAPAAPVASPA) show a composition bias toward low complexity. Disordered stretches follow at residues 1-44 (MSDP…PPVS) and 103-232 (GKGA…AKKA). One can recognise an H15 domain in the interval 39–114 (THPPVSEMVV…GASGSFKLPA (76 aa)). Basic residues-rich tracts occupy residues 149-171 (SIAK…KSTK) and 179-232 (AAKK…AKKA).

It belongs to the histone H1/H5 family.

The protein localises to the nucleus. Its subcellular location is the chromosome. Functionally, histones H1 are necessary for the condensation of nucleosome chains into higher-order structures. The sequence is that of Histone H1-II from Glyptotendipes barbipes (Midge).